The sequence spans 218 residues: Ras-related protein RABA5e (218 aa).

Residue 19 to 26 (GDSAVGKS) coordinates GTP. Residues 41–49 (SKATIGVEF) carry the Effector region motif. GTP is bound by residues 67–71 (DTAGQ), 125–128 (NKCD), and 155–156 (SA). 2 S-geranylgeranyl cysteine lipidation sites follow: cysteine 214 and cysteine 215. A Cysteine methyl ester modification is found at cysteine 215. A propeptide spans 216-218 (SST) (removed in mature form).

Belongs to the small GTPase superfamily. Rab family.

Its subcellular location is the cell membrane. Its function is as follows. Intracellular vesicle trafficking and protein transport. This Arabidopsis thaliana (Mouse-ear cress) protein is Ras-related protein RABA5e (RABA5E).